Reading from the N-terminus, the 358-residue chain is Peptide chain release factor 1 (358 aa).

Gln-233 is subject to N5-methylglutamine.

The protein belongs to the prokaryotic/mitochondrial release factor family. In terms of processing, methylated by PrmC. Methylation increases the termination efficiency of RF1.

It is found in the cytoplasm. Functionally, peptide chain release factor 1 directs the termination of translation in response to the peptide chain termination codons UAG and UAA. The chain is Peptide chain release factor 1 from Clostridium botulinum (strain ATCC 19397 / Type A).